The chain runs to 621 residues: tRNA uridine 5-carboxymethylaminomethyl modification enzyme MnmG (621 aa).

FAD is bound at residue 11–16 (GAGHAG). 271-285 (GPRYCPSVEDKINRF) contributes to the NAD(+) binding site.

This sequence belongs to the MnmG family. As to quaternary structure, homodimer. Heterotetramer of two MnmE and two MnmG subunits. FAD serves as cofactor.

It is found in the cytoplasm. Functionally, NAD-binding protein involved in the addition of a carboxymethylaminomethyl (cmnm) group at the wobble position (U34) of certain tRNAs, forming tRNA-cmnm(5)s(2)U34. The chain is tRNA uridine 5-carboxymethylaminomethyl modification enzyme MnmG from Cytophaga hutchinsonii (strain ATCC 33406 / DSM 1761 / CIP 103989 / NBRC 15051 / NCIMB 9469 / D465).